We begin with the raw amino-acid sequence, 323 residues long: rRNA 2'-O-methyltransferase fibrillarin (323 aa).

The disordered stretch occupies residues 1–78 (MRPGFSPRGG…GGGRGGFGGG (78 aa)). 2 stretches are compositionally biased toward gly residues: residues 7-44 (PRGG…GGRG) and 63-78 (GRGG…FGGG). 4 positions are modified to asymmetric dimethylarginine: Arg-8, Arg-17, Arg-23, and Arg-29. S-adenosyl-L-methionine-binding positions include 174 to 175 (TT), 193 to 194 (EF), 218 to 219 (DA), and 238 to 241 (DVAQ). The helical stretch occupies residues 276–308 (APEAVFAAEVKKMQQENMKPQEQLTLEPYERDH).

The protein belongs to the methyltransferase superfamily. Fibrillarin family. As to quaternary structure, component of box C/D small nucleolar ribonucleoprotein (snoRNP) particles. Part of the small subunit (SSU) processome, composed of more than 70 proteins and the RNA chaperone small nucleolar RNA (snoRNA) U3. By homology to other fibrillarins, some or all of the N-terminal domain arginines are modified to asymmetric dimethylarginine (DMA).

The protein localises to the nucleus. The protein resides in the nucleolus. Its subcellular location is the nucleoplasm. It carries out the reaction L-glutaminyl-[histone H2A] + S-adenosyl-L-methionine = N(5)-methyl-L-glutaminyl-[histone H2A] + S-adenosyl-L-homocysteine + H(+). The enzyme catalyses a ribonucleotide in rRNA + S-adenosyl-L-methionine = a 2'-O-methylribonucleotide in rRNA + S-adenosyl-L-homocysteine + H(+). It catalyses the reaction a ribonucleotide in U6 snRNA + S-adenosyl-L-methionine = a 2'-O-methylribonucleotide in U6 snRNA + S-adenosyl-L-homocysteine + H(+). Functionally, S-adenosyl-L-methionine-dependent methyltransferase that has the ability to methylate both RNAs and proteins. Involved in pre-rRNA processing by catalyzing the site-specific 2'-hydroxyl methylation of ribose moieties in pre-ribosomal RNA. Probably catalyzes 2'-O-methylation of U6 snRNAs in box C/D RNP complexes. U6 snRNA 2'-O-methylation is required for mRNA splicing fidelity. Also acts as a protein methyltransferase by mediating methylation of 'Gln-105' of histone H2A (H2AQ104me), a modification that impairs binding of the FACT complex and is specifically present at 35S ribosomal DNA locus. Part of the small subunit (SSU) processome, first precursor of the small eukaryotic ribosomal subunit. During the assembly of the SSU processome in the nucleolus, many ribosome biogenesis factors, an RNA chaperone and ribosomal proteins associate with the nascent pre-rRNA and work in concert to generate RNA folding, modifications, rearrangements and cleavage as well as targeted degradation of pre-ribosomal RNA by the RNA exosome. The protein is rRNA 2'-O-methyltransferase fibrillarin (fbl) of Xenopus laevis (African clawed frog).